The chain runs to 139 residues: ATP synthase epsilon chain, chloroplastic (139 aa).

Belongs to the ATPase epsilon chain family. F-type ATPases have 2 components, CF(1) - the catalytic core - and CF(0) - the membrane proton channel. CF(1) has five subunits: alpha(3), beta(3), gamma(1), delta(1), epsilon(1). CF(0) has three main subunits: a, b and c.

It localises to the plastid. The protein localises to the chloroplast thylakoid membrane. In terms of biological role, produces ATP from ADP in the presence of a proton gradient across the membrane. This Dictyota dichotoma protein is ATP synthase epsilon chain, chloroplastic.